The chain runs to 305 residues: Protoheme IX farnesyltransferase (305 aa).

9 consecutive transmembrane segments (helical) span residues 31–51 (IQVL…KGHV), 53–73 (PLLL…ANAF), 98–118 (ILPW…FAVL), 124–144 (LFAA…YTLW), 153–173 (IVIG…AVTG), 181–201 (VLFG…AMMI), 221–241 (ATAR…LVLY), 242–262 (PLGT…LWLI), and 285–305 (SIFY…FLFA).

Belongs to the UbiA prenyltransferase family. Protoheme IX farnesyltransferase subfamily.

Its subcellular location is the cell inner membrane. The catalysed reaction is heme b + (2E,6E)-farnesyl diphosphate + H2O = Fe(II)-heme o + diphosphate. Its pathway is porphyrin-containing compound metabolism; heme O biosynthesis; heme O from protoheme: step 1/1. In terms of biological role, converts heme B (protoheme IX) to heme O by substitution of the vinyl group on carbon 2 of heme B porphyrin ring with a hydroxyethyl farnesyl side group. The sequence is that of Protoheme IX farnesyltransferase from Gloeobacter violaceus (strain ATCC 29082 / PCC 7421).